The primary structure comprises 265 residues: Small ribosomal subunit protein eS4 (265 aa).

An S4 RNA-binding domain is found at 42 to 104 (LPLILIIRNR…TNENYRLLYD (63 aa)).

The protein belongs to the eukaryotic ribosomal protein eS4 family.

The protein localises to the cytoplasm. The sequence is that of Small ribosomal subunit protein eS4 (RPS4) from Zea mays (Maize).